The following is a 317-amino-acid chain: Electron transfer flavoprotein subunit alpha (317 aa).

The protein belongs to the ETF alpha-subunit/FixB family. As to quaternary structure, heterodimer of an alpha and a beta subunit. FAD serves as cofactor.

The protein resides in the cytoplasm. It participates in lipid metabolism; butanoate metabolism. Its function is as follows. Part of an electron transfer flavoprotein involved in syntrophic growth of S.wolfei with butyrate. Probably receives electrons from butyryl-CoA dehydrogenases, and transfers them to the membrane-bound quinone oxidoreductase Swol_0698. In Syntrophomonas wolfei subsp. wolfei (strain DSM 2245B / Goettingen), this protein is Electron transfer flavoprotein subunit alpha.